Consider the following 463-residue polypeptide: Cis-zeatin O-glucosyltransferase 2 (463 aa).

Histidine 21 serves as the catalytic Proton acceptor. An anthocyanidin is bound by residues histidine 21 and asparagine 91. Aspartate 127 (charge relay) is an active-site residue. Residues alanine 339, glutamine 341, histidine 356, tryptophan 359, asparagine 360, serine 361, glutamate 364, aspartate 380, and glutamine 381 each coordinate UDP-alpha-D-glucose.

Belongs to the UDP-glycosyltransferase family. In terms of tissue distribution, highly expressed in root. Expressed at much lower level in kernel. Weakly or not expressed in expressed in stems and leaves.

It catalyses the reaction cis-zeatin + UDP-alpha-D-glucose = O-beta-D-glucosyl-cis-zeatin + UDP + H(+). In terms of biological role, utilizes UDP-glucose as the sugar donor and catalyzes the formation of O-beta-D-glucosyl-cis-zeatin from cis-zeatin. May regulate active versus storage forms of cytokinins and could have an impact on seed growth. The polypeptide is Cis-zeatin O-glucosyltransferase 2 (Zea mays (Maize)).